The following is a 59-amino-acid chain: UPF0434 protein Mmc1_0910 (59 aa).

The protein belongs to the UPF0434 family.

The protein is UPF0434 protein Mmc1_0910 of Magnetococcus marinus (strain ATCC BAA-1437 / JCM 17883 / MC-1).